We begin with the raw amino-acid sequence, 278 residues long: Undecaprenyl-diphosphatase (278 aa).

8 helical membrane-spanning segments follow: residues 3-23 (YILIGVILGIVQGISEWIPIS), 42-62 (VAYSFGLFMEIGTIAAAIIYF), 88-108 (FLVIVTIITGLMGVPLYLFVI), 112-132 (ILGLPMTVLGVVLLTDGIIIY), 152-172 (IIIVGIAQGLAALPGVSRSGI), 190-210 (LSFISLIPAALGAIGVTVLFS), 225-245 (GLLISIVVATFVSIFFINALL), and 253-273 (VVVLVIILGIIAIISGILSGI).

The protein belongs to the UppP family.

Its subcellular location is the cell membrane. It catalyses the reaction di-trans,octa-cis-undecaprenyl diphosphate + H2O = di-trans,octa-cis-undecaprenyl phosphate + phosphate + H(+). In terms of biological role, catalyzes the dephosphorylation of undecaprenyl diphosphate (UPP). This is Undecaprenyl-diphosphatase from Saccharolobus islandicus (strain M.14.25 / Kamchatka #1) (Sulfolobus islandicus).